We begin with the raw amino-acid sequence, 430 residues long: MANVVVVGAQWGDEGKGKVVDIYTEYADEIVRYQGGNNAGHTLVVGEEKVVLHLIPSGVLHAGKRCVIGNGVVLDPEVFIMEVNRLKAAGRLEDDSTLLLSESLHIIMPYHKAIDIAREAKSGDKKIGTTGRGIGPCYEDKIGRRGIRLMDLIDPVAFSRKLRENLEEKNAILERLGEEPLGYNEIYRTYQDFAEILKKYMADTSLVLSKSVAAGKKLLFEGAQGTLLDVDHGTYPFVTSSSTCAGGAATGTGVSPREIHEVVGISKAYVTRVGSGPFPTELLDETGEKLRQVGGEFGATTGRPRRCGWFDAMVIRYAVRINGLTGIALTKLDVLSDFETIKVCTGYRFEGQELETLPAKLETFENCEPVYEELPGWKVDITGVRSYDQLPENAKKYVRRLEELAGCPIVMVSVGPRRDQTMMIKNPFGE.

Residues 12 to 18 and 40 to 42 each bind GTP; these read GDEGKGK and GHT. Aspartate 13 (proton acceptor) is an active-site residue. Residues aspartate 13 and glycine 40 each contribute to the Mg(2+) site. IMP contacts are provided by residues 13–16, 38–41, threonine 130, arginine 144, glutamine 224, threonine 239, and arginine 303; these read DEGK and NAGH. Histidine 41 serves as the catalytic Proton donor. 299–305 lines the substrate pocket; sequence ATTGRPR. GTP contacts are provided by residues arginine 305, 331–333, and 413–415; these read KLD and SVG.

Belongs to the adenylosuccinate synthetase family. Homodimer. The cofactor is Mg(2+).

The protein localises to the cytoplasm. The enzyme catalyses IMP + L-aspartate + GTP = N(6)-(1,2-dicarboxyethyl)-AMP + GDP + phosphate + 2 H(+). The protein operates within purine metabolism; AMP biosynthesis via de novo pathway; AMP from IMP: step 1/2. Plays an important role in the de novo pathway of purine nucleotide biosynthesis. Catalyzes the first committed step in the biosynthesis of AMP from IMP. The protein is Adenylosuccinate synthetase of Trichlorobacter lovleyi (strain ATCC BAA-1151 / DSM 17278 / SZ) (Geobacter lovleyi).